Consider the following 361-residue polypeptide: Chorismate synthase (361 aa).

Residue R48 coordinates NADP(+). Residues 126–128 (RSS), G269, 302–306 (KPVPS), and N328 contribute to the FMN site.

The protein belongs to the chorismate synthase family. As to quaternary structure, homotetramer. It depends on FMNH2 as a cofactor.

The enzyme catalyses 5-O-(1-carboxyvinyl)-3-phosphoshikimate = chorismate + phosphate. It participates in metabolic intermediate biosynthesis; chorismate biosynthesis; chorismate from D-erythrose 4-phosphate and phosphoenolpyruvate: step 7/7. Its function is as follows. Catalyzes the anti-1,4-elimination of the C-3 phosphate and the C-6 proR hydrogen from 5-enolpyruvylshikimate-3-phosphate (EPSP) to yield chorismate, which is the branch point compound that serves as the starting substrate for the three terminal pathways of aromatic amino acid biosynthesis. This reaction introduces a second double bond into the aromatic ring system. The chain is Chorismate synthase from Treponema denticola (strain ATCC 35405 / DSM 14222 / CIP 103919 / JCM 8153 / KCTC 15104).